Here is a 774-residue protein sequence, read N- to C-terminus: Shugoshin (774 aa).

The stretch at 41–105 (SLRIRGLENE…AELSSLLASL (65 aa)) forms a coiled coil. Disordered stretches follow at residues 106 to 151 (GEPP…QEGR), 205 to 661 (SPSP…DAQL), and 676 to 774 (CASP…SMML). Over residues 109-120 (PSKRRLSEERRY) the composition is skewed to basic and acidic residues. Residues 214–224 (AEETETTEQVE) are compositionally biased toward acidic residues. Residues 297 to 318 (GDNQNEPNKATKLQQGKENGNE) show a composition bias toward polar residues. The segment covering 382–398 (KGKEKVDLPAPDKKSAV) has biased composition (basic and acidic residues). The span at 399–409 (EETQGNSTSAF) shows a compositional bias: polar residues. Basic and acidic residues-rich tracts occupy residues 482–495 (NLRD…KELF) and 549–558 (FEKEKEKEPQ). Polar residues-rich tracts occupy residues 595–604 (PSVQEQSTLN) and 640–651 (QSMSRSVPTIPT). The span at 706–722 (ASSAASTETTATASAKP) shows a compositional bias: low complexity. Positions 743–754 (LAQEEEDEEDVG) are enriched in acidic residues. The span at 765–774 (RASRRRSMML) shows a compositional bias: basic residues.

Belongs to the shugoshin family.

Its subcellular location is the nucleus. The protein resides in the chromosome. It is found in the centromere. In terms of biological role, plays a central role in chromosome cohesion during cell division by preventing premature dissociation of cohesin complex from centromeres after prophase, when most of cohesin complex dissociates from chromosomes arms. This Neurospora crassa (strain ATCC 24698 / 74-OR23-1A / CBS 708.71 / DSM 1257 / FGSC 987) protein is Shugoshin (sgo-1).